The chain runs to 146 residues: Ribosome maturation factor RimP (146 aa).

Belongs to the RimP family.

The protein localises to the cytoplasm. Its function is as follows. Required for maturation of 30S ribosomal subunits. This is Ribosome maturation factor RimP from Helicobacter pylori (strain G27).